Here is a 110-residue protein sequence, read N- to C-terminus: Small ribosomal subunit protein bS16 (110 aa).

Residues 84-110 form a disordered region; it reads KRAPRNNPEKAVPRKERKAAAEAAAKA. A compositionally biased stretch (basic and acidic residues) spans 90 to 103; the sequence is NPEKAVPRKERKAA.

Belongs to the bacterial ribosomal protein bS16 family.

This Afipia carboxidovorans (strain ATCC 49405 / DSM 1227 / KCTC 32145 / OM5) (Oligotropha carboxidovorans) protein is Small ribosomal subunit protein bS16.